The sequence spans 441 residues: Protein kinase C and casein kinase substrate in neurons protein 1 (441 aa).

2 positions are modified to phosphoserine: serine 2 and serine 76. Residues 10–280 (EEITDSFWEV…AIRGADAQED (271 aa)) form the F-BAR domain. Residues 23 to 272 (KRTVKRIDDG…HVYRELEQAI (250 aa)) adopt a coiled-coil conformation. At threonine 181 the chain carries Phosphothreonine. The tract at residues 310 to 380 (AAKKEKQPKK…ANGGANPFED (71 aa)) is disordered. Basic and acidic residues predominate over residues 311-321 (AKKEKQPKKAE). Over residues 326–348 (SNATGAVESTSQAGDRGSVSSYD) the composition is skewed to polar residues. A phosphoserine mark is found at serine 343, serine 345, serine 346, serine 358, and serine 362. One can recognise an SH3 domain in the interval 382 to 441 (AKGVRVRALYDYDGQEQDELSFKAGDELTKLGEEDEQGWCRGRLDSGQLGLYPANYVEAI). Tyrosine 391 carries the post-translational modification Phosphotyrosine. Serine 402 and serine 427 each carry phosphoserine.

This sequence belongs to the PACSIN family. Homodimer. May form heterooligomers with other PACSINs. Interacts with MAPT. Interacts with TRPV4. Interacts (via SH3 domain) with SYNJ1 and WASL. Interacts (via SH3 domain) with DNM1; the interaction is reduced by DNM1 phosphorylation. Interacts with DNM2 and DNM3. Interacts with both COBL and DBNL. Identified in a complex composed of COBL, PACSIN1 and WASL. Interacts with EHD1 and EHD3. Phosphorylated by casein kinase 2 (CK2) and protein kinase C (PKC). As to expression, highly expressed in brain (at protein level).

The protein localises to the cytoplasm. It localises to the cell projection. Its subcellular location is the synapse. It is found in the synaptosome. The protein resides in the ruffle membrane. The protein localises to the membrane. It localises to the cytoplasmic vesicle membrane. Its subcellular location is the cytosol. It is found in the cell membrane. In terms of biological role, binds to membranes via its F-BAR domain and mediates membrane tubulation. Plays a role in the reorganization of the microtubule cytoskeleton via its interaction with MAPT; this decreases microtubule stability and inhibits MAPT-induced microtubule polymerization. Plays a role in cellular transport processes by recruiting DNM1, DNM2 and DNM3 to membranes. Plays a role in the reorganization of the actin cytoskeleton and in neuron morphogenesis via its interaction with COBL and WASL, and by recruiting COBL to the cell cortex. Plays a role in the regulation of neurite formation, neurite branching and the regulation of neurite length. Required for normal synaptic vesicle endocytosis; this process retrieves previously released neurotransmitters to accommodate multiple cycles of neurotransmission. Required for normal excitatory and inhibitory synaptic transmission. The chain is Protein kinase C and casein kinase substrate in neurons protein 1 (Pacsin1) from Rattus norvegicus (Rat).